A 174-amino-acid polypeptide reads, in one-letter code: SUSHI domain-containing protein E3 (174 aa).

The signal sequence occupies residues 1–20; that stretch reads MATEVQFACALVVLLGCGYA. The region spanning 35–97 is the Sushi domain; that stretch reads QNCTTYPSIE…WTNGPPSCVK (63 aa). Intrachain disulfides connect cysteine 37-cysteine 78 and cysteine 64-cysteine 95. Over residues 108–127 the composition is skewed to low complexity; the sequence is STSTTPVTTGTFPDPQNTTH. Residues 108 to 133 form a disordered region; that stretch reads STSTTPVTTGTFPDPQNTTHPTHHTV. Residues 145-165 form a helical membrane-spanning segment; it reads FGYTPWAIITLVVIILLVVWI.

The protein localises to the host membrane. This is SUSHI domain-containing protein E3 (E3) from Equine herpesvirus 2 (strain 86/87) (EHV-2).